The primary structure comprises 355 residues: Nuclear hormone receptor family member nhr-127 (355 aa).

A DNA-binding region (nuclear receptor) is located at residues 10 to 86; the sequence is SIPCEVCKNQ…AGMKAEKIQK (77 aa). 2 NR C4-type zinc fingers span residues 13–33 and 49–69; these read CEVC…CGAC and CKDG…CRYC. The 230-residue stretch at 126 to 355 folds into the NR LBD domain; that stretch reads NPHNASEGCS…IVQIVQNNFY (230 aa).

The protein belongs to the nuclear hormone receptor family.

It is found in the nucleus. Functionally, orphan nuclear receptor. May play a role in modulation of lifespan and immunity. The chain is Nuclear hormone receptor family member nhr-127 (nhr-127) from Caenorhabditis elegans.